Here is a 268-residue protein sequence, read N- to C-terminus: Ribosomal RNA small subunit methyltransferase A (268 aa).

S-adenosyl-L-methionine is bound by residues asparagine 16, leucine 18, glycine 43, glutamate 64, aspartate 89, and asparagine 110.

This sequence belongs to the class I-like SAM-binding methyltransferase superfamily. rRNA adenine N(6)-methyltransferase family. RsmA subfamily.

Its subcellular location is the cytoplasm. It carries out the reaction adenosine(1518)/adenosine(1519) in 16S rRNA + 4 S-adenosyl-L-methionine = N(6)-dimethyladenosine(1518)/N(6)-dimethyladenosine(1519) in 16S rRNA + 4 S-adenosyl-L-homocysteine + 4 H(+). Its function is as follows. Specifically dimethylates two adjacent adenosines (A1518 and A1519) in the loop of a conserved hairpin near the 3'-end of 16S rRNA in the 30S particle. May play a critical role in biogenesis of 30S subunits. The sequence is that of Ribosomal RNA small subunit methyltransferase A from Pseudomonas aeruginosa (strain ATCC 15692 / DSM 22644 / CIP 104116 / JCM 14847 / LMG 12228 / 1C / PRS 101 / PAO1).